Consider the following 1766-residue polypeptide: E3 ubiquitin-protein ligase listerin (1766 aa).

Residues 1–11 (MGGKNKQRTKG) are compositionally biased toward basic residues. Positions 1 to 20 (MGGKNKQRTKGNVRPSSSGR) are disordered. HEAT repeat units follow at residues 100 to 138 (KGVL…KVKK), 193 to 231 (VLQD…SLLA), 292 to 329 (AEAP…TIED), 335 to 372 (NARK…KVPP), and 512 to 549 (EKTL…DEDE). Residues 529–567 (KTATKPNNRKSLKVKFSDEDESERNTENGKITEVRSNSD) form a disordered region. Over residues 551–566 (ERNTENGKITEVRSNS) the composition is skewed to basic and acidic residues. 6 HEAT repeats span residues 606 to 644 (EQHL…ESQE), 672 to 710 (KDMH…KWIV), 916 to 953 (QVLI…NRTE), 1184 to 1227 (HLLP…MIRY), 1314 to 1355 (GIHN…YISK), and 1406 to 1447 (SKLM…TQEL). The RING-type zinc finger occupies 1715-1762 (CMICFSVIHGSNYSLPKKACRTCKKKFHSACLYKWFTSSNKSTCPLCR).

Belongs to the LTN1 family. Component of the ribosome quality control complex (RQC), composed of at least the E3 ubiquitin ligase LTN1 and NEMF associated with the 60S ribosomal subunit. The complex probably also contains TCF25 as well as VCP/p97 and its ubiquitin-binding cofactors.

The protein localises to the cytoplasm. It localises to the cytosol. The enzyme catalyses S-ubiquitinyl-[E2 ubiquitin-conjugating enzyme]-L-cysteine + [acceptor protein]-L-lysine = [E2 ubiquitin-conjugating enzyme]-L-cysteine + N(6)-ubiquitinyl-[acceptor protein]-L-lysine.. The protein operates within protein modification; protein ubiquitination. In terms of biological role, E3 ubiquitin-protein ligase component of the ribosome quality control complex (RQC), a ribosome-associated complex that mediates ubiquitination and extraction of incompletely synthesized nascent chains for proteasomal degradation. Within the RQC complex, LTN1 is recruited to stalled 60S ribosomal subunits by NEMF and mediates ubiquitination of stalled nascent chains. Ubiquitination leads to VCP/p97 recruitment for extraction and degradation of the incomplete translation product. The sequence is that of E3 ubiquitin-protein ligase listerin (LTN1) from Gallus gallus (Chicken).